The sequence spans 525 residues: GMP synthase [glutamine-hydrolyzing] (525 aa).

Residues 8–206 enclose the Glutamine amidotransferase type-1 domain; it reads PLLILDFGSQ…VVDICKASTD (199 aa). The active-site Nucleophile is the C85. Residues H180 and E182 contribute to the active site. The region spanning 207–400 is the GMPS ATP-PPase domain; the sequence is WTPEHIIDEA…LGLPHDMVYR (194 aa). 234–240 contacts ATP; sequence SGGVDSS.

Homodimer.

The catalysed reaction is XMP + L-glutamine + ATP + H2O = GMP + L-glutamate + AMP + diphosphate + 2 H(+). It participates in purine metabolism; GMP biosynthesis; GMP from XMP (L-Gln route): step 1/1. Its function is as follows. Catalyzes the synthesis of GMP from XMP. In Legionella pneumophila (strain Paris), this protein is GMP synthase [glutamine-hydrolyzing].